The sequence spans 100 residues: Large ribosomal subunit protein uL23 (100 aa).

Belongs to the universal ribosomal protein uL23 family. As to quaternary structure, part of the 50S ribosomal subunit. Contacts protein L29, and trigger factor when it is bound to the ribosome.

Its function is as follows. One of the early assembly proteins it binds 23S rRNA. One of the proteins that surrounds the polypeptide exit tunnel on the outside of the ribosome. Forms the main docking site for trigger factor binding to the ribosome. This chain is Large ribosomal subunit protein uL23, found in Corynebacterium aurimucosum (strain ATCC 700975 / DSM 44827 / CIP 107346 / CN-1) (Corynebacterium nigricans).